The sequence spans 199 residues: MANRGPAYGLSREVQQKIEKQYDADLEQILIQWITTQCRKDVGRPQPGRENFQNWLKDGTVLCELINGLYPEGQAPVKKIQASTMAFKQMEQISQFLQAAERYGINTTDIFQTVDLWEGKNMACVQRTLMNLGGLAVARDDGLFSGDPNWFPKKSKENPRYFSDNQLQEGKNVIGLQMGTNRGASQAGMTGYGMPRQIL.

Ala-2 carries the post-translational modification N-acetylalanine. Ser-11 carries the post-translational modification Phosphoserine. N6-acetyllysine is present on residues Lys-17 and Lys-20. Residues 24 to 136 (ADLEQILIQW…RTLMNLGGLA (113 aa)) form the Calponin-homology (CH) domain. Ser-163 is subject to Phosphoserine. Residue Lys-171 forms a Glycyl lysine isopeptide (Lys-Gly) (interchain with G-Cter in SUMO2) linkage. The stretch at 174 to 199 (IGLQMGTNRGASQAGMTGYGMPRQIL) is one Calponin-like repeat. Residue Thr-180 is modified to Phosphothreonine. Omega-N-methylarginine occurs at positions 182 and 196.

The protein belongs to the calponin family.

The chain is Transgelin-2 (TAGLN2) from Bos taurus (Bovine).